A 1470-amino-acid chain; its full sequence is Histone acetyltransferase HAC4 (1470 aa).

Polar residues predominate over residues methionine 1–asparagine 10. Disordered regions lie at residues methionine 1–alanine 20 and threonine 342–asparagine 376. Residues serine 11 to alanine 20 are compositionally biased toward low complexity. The span at threonine 342–glycine 365 shows a compositional bias: polar residues. A TAZ-type 1 zinc finger spans residues glycine 416–valine 495. The tract at residues serine 518–glutamate 566 is disordered. The segment covering glutamine 522 to tyrosine 533 has biased composition (basic residues). The segment at histidine 764 to glutamine 841 adopts a PHD-type zinc-finger fold. The 438-residue stretch at valine 856–alanine 1293 folds into the CBP/p300-type HAT domain. Residues leucine 979–serine 981, arginine 998–threonine 999, and tryptophan 1054 each bind acetyl-CoA. ZZ-type zinc fingers lie at residues histidine 1175–valine 1238 and alanine 1295–aspartate 1347. Positions 1180, 1183, 1195, 1198, 1204, 1207, 1220, 1228, 1300, 1303, 1315, 1318, 1324, 1327, 1335, and 1337 each coordinate Zn(2+). The TAZ-type 2 zinc finger occupies serine 1358–leucine 1436.

In terms of tissue distribution, rosette leaves, stems and flowers.

Its subcellular location is the nucleus. It carries out the reaction L-lysyl-[protein] + acetyl-CoA = N(6)-acetyl-L-lysyl-[protein] + CoA + H(+). In terms of biological role, acetyltransferase enzyme. Acetylates histones, giving a specific tag for transcriptional activation. The polypeptide is Histone acetyltransferase HAC4 (HAC4) (Arabidopsis thaliana (Mouse-ear cress)).